Consider the following 346-residue polypeptide: Holliday junction branch migration complex subunit RuvB (346 aa).

Residues 1–182 (MSEAARLIAP…FGIPVRLNFY (182 aa)) form a large ATPase domain (RuvB-L) region. ATP is bound by residues leucine 21, arginine 22, glycine 63, lysine 66, threonine 67, threonine 68, 129–131 (EDF), arginine 172, tyrosine 182, and arginine 219. Residue threonine 67 coordinates Mg(2+). A small ATPAse domain (RuvB-S) region spans residues 183–253 (TVEELELIVR…IADEALTRLL (71 aa)). Positions 256–346 (SMGLDQLDRR…SQFRLTLEDD (91 aa)) are head domain (RuvB-H). 3 residues coordinate DNA: arginine 292, arginine 311, and arginine 316.

Belongs to the RuvB family. Homohexamer. Forms an RuvA(8)-RuvB(12)-Holliday junction (HJ) complex. HJ DNA is sandwiched between 2 RuvA tetramers; dsDNA enters through RuvA and exits via RuvB. An RuvB hexamer assembles on each DNA strand where it exits the tetramer. Each RuvB hexamer is contacted by two RuvA subunits (via domain III) on 2 adjacent RuvB subunits; this complex drives branch migration. In the full resolvosome a probable DNA-RuvA(4)-RuvB(12)-RuvC(2) complex forms which resolves the HJ.

The protein localises to the cytoplasm. The enzyme catalyses ATP + H2O = ADP + phosphate + H(+). In terms of biological role, the RuvA-RuvB-RuvC complex processes Holliday junction (HJ) DNA during genetic recombination and DNA repair, while the RuvA-RuvB complex plays an important role in the rescue of blocked DNA replication forks via replication fork reversal (RFR). RuvA specifically binds to HJ cruciform DNA, conferring on it an open structure. The RuvB hexamer acts as an ATP-dependent pump, pulling dsDNA into and through the RuvAB complex. RuvB forms 2 homohexamers on either side of HJ DNA bound by 1 or 2 RuvA tetramers; 4 subunits per hexamer contact DNA at a time. Coordinated motions by a converter formed by DNA-disengaged RuvB subunits stimulates ATP hydrolysis and nucleotide exchange. Immobilization of the converter enables RuvB to convert the ATP-contained energy into a lever motion, pulling 2 nucleotides of DNA out of the RuvA tetramer per ATP hydrolyzed, thus driving DNA branch migration. The RuvB motors rotate together with the DNA substrate, which together with the progressing nucleotide cycle form the mechanistic basis for DNA recombination by continuous HJ branch migration. Branch migration allows RuvC to scan DNA until it finds its consensus sequence, where it cleaves and resolves cruciform DNA. This Sinorhizobium medicae (strain WSM419) (Ensifer medicae) protein is Holliday junction branch migration complex subunit RuvB.